Consider the following 423-residue polypeptide: Dihydroorotase (423 aa).

The Zn(2+) site is built by histidine 60 and histidine 62. Substrate-binding positions include 62–64 (HFR) and asparagine 94. Residues aspartate 152, histidine 179, histidine 232, and aspartate 305 each contribute to the Zn(2+) site. Aspartate 305 is an active-site residue. Substrate-binding positions include histidine 309 and 323–324 (PG).

This sequence belongs to the metallo-dependent hydrolases superfamily. DHOase family. Class I DHOase subfamily. Zn(2+) serves as cofactor.

The catalysed reaction is (S)-dihydroorotate + H2O = N-carbamoyl-L-aspartate + H(+). Its pathway is pyrimidine metabolism; UMP biosynthesis via de novo pathway; (S)-dihydroorotate from bicarbonate: step 3/3. Its function is as follows. Catalyzes the reversible cyclization of carbamoyl aspartate to dihydroorotate. The polypeptide is Dihydroorotase (Sulfurihydrogenibium sp. (strain YO3AOP1)).